The sequence spans 503 residues: Glycerol kinase (503 aa).

Thr-14 is a binding site for ADP. Residues Thr-14, Thr-15, and Ser-16 each coordinate ATP. Position 14 (Thr-14) interacts with sn-glycerol 3-phosphate. Residue Arg-18 coordinates ADP. Residues Arg-84, Glu-85, Tyr-136, and Asp-246 each coordinate sn-glycerol 3-phosphate. Arg-84, Glu-85, Tyr-136, Asp-246, and Gln-247 together coordinate glycerol. ADP-binding residues include Thr-268 and Gly-311. ATP-binding residues include Thr-268, Gly-311, Gln-315, and Gly-412. Residues Gly-412 and Asn-416 each coordinate ADP.

Belongs to the FGGY kinase family.

It catalyses the reaction glycerol + ATP = sn-glycerol 3-phosphate + ADP + H(+). Its pathway is polyol metabolism; glycerol degradation via glycerol kinase pathway; sn-glycerol 3-phosphate from glycerol: step 1/1. With respect to regulation, inhibited by fructose 1,6-bisphosphate (FBP). In terms of biological role, key enzyme in the regulation of glycerol uptake and metabolism. Catalyzes the phosphorylation of glycerol to yield sn-glycerol 3-phosphate. The protein is Glycerol kinase of Haemophilus influenzae (strain 86-028NP).